We begin with the raw amino-acid sequence, 2075 residues long: Autophagy-related protein 2 homolog B (2075 aa).

Residues 13-107 (ACRYLLQRYL…LEMVFRPRPR (95 aa)) enclose the Chorein N-terminal domain. Ser255, Ser379, Ser496, Ser839, Ser885, Ser898, and Ser1007 each carry phosphoserine. Tyr1011 is subject to Phosphotyrosine. Ser1015 and Ser1017 each carry phosphoserine. Position 1021 is a phosphothreonine (Thr1021). Residues 1373-1403 (KAEMKPGVPQRKPKVDSSARSSSHGPVLPEA) form a disordered region. Position 1525 is a phosphoserine (Ser1525). Disordered regions lie at residues 1570–1593 (TSPAKSYIPHSSPSQTPTRHGRHT), 1759–1792 (EPNLVVSFPGPKQASPNHRANSAEGGNGLEEDVS), and 2055–2075 (RNQIRPDVRQDESQKWRHGED). Over residues 1578–1587 (PHSSPSQTPT) the composition is skewed to polar residues. Residues 2058-2075 (IRPDVRQDESQKWRHGED) are compositionally biased toward basic and acidic residues.

This sequence belongs to the ATG2 family. As to quaternary structure, interacts with WDR45/WIPI4.

It is found in the preautophagosomal structure membrane. It localises to the lipid droplet. Its subcellular location is the endoplasmic reticulum membrane. The catalysed reaction is a 1,2-diacyl-sn-glycero-3-phospho-L-serine(in) = a 1,2-diacyl-sn-glycero-3-phospho-L-serine(out). It carries out the reaction a 1,2-diacyl-sn-glycero-3-phosphoethanolamine(in) = a 1,2-diacyl-sn-glycero-3-phosphoethanolamine(out). In terms of biological role, lipid transfer protein required for both autophagosome formation and regulation of lipid droplet morphology and dispersion. Tethers the edge of the isolation membrane (IM) to the endoplasmic reticulum (ER) and mediates direct lipid transfer from ER to IM for IM expansion. Binds to the ER exit site (ERES), which is the membrane source for autophagosome formation, and extracts phospholipids from the membrane source and transfers them to ATG9 (ATG9A or ATG9B) to the IM for membrane expansion. Lipid transfer activity is enhanced by WDR45/WIPI4, which promotes ATG2B-association with phosphatidylinositol 3-monophosphate (PI3P)-containing membranes. The protein is Autophagy-related protein 2 homolog B of Mus musculus (Mouse).